The sequence spans 31 residues: Cytochrome b6-f complex subunit 6 (31 aa).

Residues 7–25 form a helical membrane-spanning segment; it reads YSGFLLAAPIPASAPFTGL.

The protein belongs to the PetL family. As to quaternary structure, the 4 large subunits of the cytochrome b6-f complex are cytochrome b6, subunit IV (17 kDa polypeptide, PetD), cytochrome f and the Rieske protein, while the 4 small subunits are PetG, PetL, PetM and PetN. The complex functions as a dimer.

It is found in the plastid. It localises to the chloroplast thylakoid membrane. Functionally, component of the cytochrome b6-f complex, which mediates electron transfer between photosystem II (PSII) and photosystem I (PSI), cyclic electron flow around PSI, and state transitions. PetL is important for photoautotrophic growth as well as for electron transfer efficiency and stability of the cytochrome b6-f complex. In Huperzia lucidula (Shining clubmoss), this protein is Cytochrome b6-f complex subunit 6.